A 339-amino-acid polypeptide reads, in one-letter code: Ketol-acid reductoisomerase (NADP(+)) (339 aa).

The 182-residue stretch at 1 to 182 (MRVYYDRDAD…GGGRAGIIET (182 aa)) folds into the KARI N-terminal Rossmann domain. Residues 24 to 27 (YGSQ), arginine 48, serine 51, serine 53, and 83 to 86 (DELQ) contribute to the NADP(+) site. Histidine 108 is a catalytic residue. Residue glycine 134 participates in NADP(+) binding. In terms of domain architecture, KARI C-terminal knotted spans 183–328 (TFREECETDL…AKLRDMMPWI (146 aa)). Mg(2+) is bound by residues aspartate 191, glutamate 195, glutamate 227, and glutamate 231. Serine 252 lines the substrate pocket.

The protein belongs to the ketol-acid reductoisomerase family. It depends on Mg(2+) as a cofactor.

The enzyme catalyses (2R)-2,3-dihydroxy-3-methylbutanoate + NADP(+) = (2S)-2-acetolactate + NADPH + H(+). It catalyses the reaction (2R,3R)-2,3-dihydroxy-3-methylpentanoate + NADP(+) = (S)-2-ethyl-2-hydroxy-3-oxobutanoate + NADPH + H(+). It functions in the pathway amino-acid biosynthesis; L-isoleucine biosynthesis; L-isoleucine from 2-oxobutanoate: step 2/4. It participates in amino-acid biosynthesis; L-valine biosynthesis; L-valine from pyruvate: step 2/4. Functionally, involved in the biosynthesis of branched-chain amino acids (BCAA). Catalyzes an alkyl-migration followed by a ketol-acid reduction of (S)-2-acetolactate (S2AL) to yield (R)-2,3-dihydroxy-isovalerate. In the isomerase reaction, S2AL is rearranged via a Mg-dependent methyl migration to produce 3-hydroxy-3-methyl-2-ketobutyrate (HMKB). In the reductase reaction, this 2-ketoacid undergoes a metal-dependent reduction by NADPH to yield (R)-2,3-dihydroxy-isovalerate. The polypeptide is Ketol-acid reductoisomerase (NADP(+)) (Rhodopseudomonas palustris (strain BisB18)).